The primary structure comprises 462 residues: MVEIRLTNTRTRRKEVFRPIDPQNVRLYLCGPTVYDRAHLGNARPVVVIDVLVRLLRHLLGADHVTYVRNFTDVDDKINATALARKEAGTPGTLEELIRERTHETIGWYHADMDALGAERPDHEPRATDYIGEMIAMIETLIAGGHAYARDGHVLFRVRSYADYGKLSGRSVDDMIAGARVEVAPFKEDPMDFVLWKPSDDELPGWDSPWGRGRPGWHIECSAMSYELLGESFDIHAGGIDLQFPHHENEIAQSCCAHPHGDFARVWLHNEMLQVEGRKMSKSLGNFFTVRDLLDQGIPGEVIRFVLLSTHYRKPMDWTAEKAREAEAVLRRWRGLVAGVEPAPGPAPAVVAALADDLNTAGAIAALHEMAGQGDGPGLLAGARMLGLLTEDLGGWIAEGPDLSALTERMAALRADAKASKDFSAVDALKQRLLDAGVEVRMSAAGVELLPGPDFDAAKLPE.

C30 is a binding site for Zn(2+). The 'HIGH' region motif lies at 32-42 (PTVYDRAHLGN). 3 residues coordinate Zn(2+): C221, H246, and E250. Residues 279-283 (KMSKS) carry the 'KMSKS' region motif. K282 is a binding site for ATP.

This sequence belongs to the class-I aminoacyl-tRNA synthetase family. Monomer. Requires Zn(2+) as cofactor.

It localises to the cytoplasm. It carries out the reaction tRNA(Cys) + L-cysteine + ATP = L-cysteinyl-tRNA(Cys) + AMP + diphosphate. The polypeptide is Cysteine--tRNA ligase (Paracoccus denitrificans (strain Pd 1222)).